The primary structure comprises 573 residues: MRLTVGQVHRHVLALASSRSCFVLGDNLPLRMLSLPRAVRFHQTAWLGTETVQDKSASLTLASLEGQNKVEYGKKEKATRIGGPKPSSRASALKVKPKVSSFNSKPAKSTLPKSAVVKKTLKIDESLFSAKSFEELGLPPLLIDRLNKEGLSTPTEVQSAAIPIISQKHDAVIQSYTGSGKTLAYLLPILSEIGPLKRPTEQDGSDKRSGVEAVIVAPSRELGMQIVREVEKILGPNDKRLVQQLVGGANRSRQEEALKKNKPLIVVGTPGRISEISAGGKLHTHGCRFLVLDEVDQLLSFNYREDMHRILEHVGRKSGTSSRDILGPLARRSERQTILVSATIPFSVIRAARSWGHDPVLVRAMSVVPLDSITVPRPVLSQTDANPNSPSNSVNQAAVNSLPPSLEHYYCISKAQHKVDTLRRCIHALEAQTVIAFMNNTKPLKDVVFKLEARGMKATELHGDLGKLARSTVLKKFKDGEFRVLVTNELSARGLDVPECDLVINLDLPTDSTHYAHRAGRTGRLGRKGTVVTICEETETFVVRKMRKQLAVPIKPCEFTEGKLLVHNEEDVE.

The Q motif signature appears at 131–159 (KSFEELGLPPLLIDRLNKEGLSTPTEVQS). One can recognise a Helicase ATP-binding domain in the interval 162–362 (IPIISQKHDA…RSWGHDPVLV (201 aa)). 175–182 (SYTGSGKT) lines the ATP pocket. Residues 293-296 (DEVD) carry the DEAD box motif. In terms of domain architecture, Helicase C-terminal spans 421–565 (TLRRCIHALE…PCEFTEGKLL (145 aa)).

This sequence belongs to the DEAD box helicase family.

The catalysed reaction is ATP + H2O = ADP + phosphate + H(+). This chain is DEAD-box ATP-dependent RNA helicase 47B, found in Oryza sativa subsp. japonica (Rice).